A 235-amino-acid polypeptide reads, in one-letter code: Hydroxyacylglutathione hydrolase (235 aa).

Zn(2+) is bound by residues histidine 53, histidine 55, aspartate 57, histidine 58, histidine 109, aspartate 127, and histidine 165.

It belongs to the metallo-beta-lactamase superfamily. Glyoxalase II family. In terms of assembly, monomer. The cofactor is Zn(2+).

It carries out the reaction an S-(2-hydroxyacyl)glutathione + H2O = a 2-hydroxy carboxylate + glutathione + H(+). The protein operates within secondary metabolite metabolism; methylglyoxal degradation; (R)-lactate from methylglyoxal: step 2/2. Its function is as follows. Thiolesterase that catalyzes the hydrolysis of S-D-lactoyl-glutathione to form glutathione and D-lactic acid. The sequence is that of Hydroxyacylglutathione hydrolase from Haemophilus ducreyi (strain 35000HP / ATCC 700724).